The following is a 130-amino-acid chain: Small ribosomal subunit protein uS9 (130 aa).

The protein belongs to the universal ribosomal protein uS9 family.

The chain is Small ribosomal subunit protein uS9 from Photorhabdus laumondii subsp. laumondii (strain DSM 15139 / CIP 105565 / TT01) (Photorhabdus luminescens subsp. laumondii).